Here is a 467-residue protein sequence, read N- to C-terminus: NADH-quinone oxidoreductase subunit N 2 (467 aa).

13 consecutive transmembrane segments (helical) span residues 1 to 21 (MSIF…ALFV), 31 to 51 (VASW…FALG), 66 to 86 (LSQF…GIAA), 99 to 119 (FMLL…VELI), 153 to 173 (ILFG…IIAA), 195 to 215 (AVIG…LFPF), 231 to 253 (AAYV…AAFV), 258 to 280 (EVTT…AALV), 287 to 307 (LLGF…AAGS), 315 to 335 (AFYS…VCAI), 357 to 377 (LAMI…TAGF), 394 to 414 (WLVI…LSMV), and 434 to 454 (LIFG…PAPL).

It belongs to the complex I subunit 2 family. NDH-1 is composed of 14 different subunits. Subunits NuoA, H, J, K, L, M, N constitute the membrane sector of the complex.

Its subcellular location is the cell inner membrane. It carries out the reaction a quinone + NADH + 5 H(+)(in) = a quinol + NAD(+) + 4 H(+)(out). Functionally, NDH-1 shuttles electrons from NADH, via FMN and iron-sulfur (Fe-S) centers, to quinones in the respiratory chain. The immediate electron acceptor for the enzyme in this species is believed to be ubiquinone. Couples the redox reaction to proton translocation (for every two electrons transferred, four hydrogen ions are translocated across the cytoplasmic membrane), and thus conserves the redox energy in a proton gradient. The protein is NADH-quinone oxidoreductase subunit N 2 of Solidesulfovibrio magneticus (strain ATCC 700980 / DSM 13731 / RS-1) (Desulfovibrio magneticus).